We begin with the raw amino-acid sequence, 395 residues long: Methylmalonyl-CoA decarboxylase subunit beta (395 aa).

9 helical membrane-spanning segments follow: residues 17–37 (LNMG…LAIA), 43–63 (LLLV…AGMM), 103–123 (GIFP…GPLI), 128–148 (SLLL…GAIA), 180–200 (PHLM…VPII), 230–250 (IIFP…AATL), 278–298 (INII…AEAF), 304–324 (LAIL…GVLL), and 374–394 (GPNV…LSLF).

It belongs to the GcdB/MmdB/OadB family. As to quaternary structure, the methylmalonyl-CoA decarboxylase is composed of four subunits: the carboxyltransferase alpha subunit (MmdA), the tunnel beta subunit (MmdB), the biotin-containing gamma subunit (MmdC) and the delta subunit (MmdD). The N-terminus is blocked.

The protein localises to the cell membrane. The enzyme catalyses (S)-methylmalonyl-CoA + Na(+)(in) + H(+)(out) = propanoyl-CoA + Na(+)(out) + CO2. In terms of biological role, tunnel subunit of the sodium ion pump methylmalonyl-CoA decarboxylase, which converts the chemical energy of a decarboxylation reaction into an electrochemical gradient of Na(+) ions across the cytoplasmic membrane, thereby creating a sodium ion motive force that is used for ATP synthesis. The beta subunit catalyzes the decarboxylation of the carboxybiotin carrier protein and the coupled export of Na(+) ions. The sequence is that of Methylmalonyl-CoA decarboxylase subunit beta from Propionigenium modestum.